The chain runs to 976 residues: Protein PLASTID MOVEMENT IMPAIRED 1-RELATED 2 (976 aa).

In terms of domain architecture, C2 NT-type spans Ile81–Val229. Basic and acidic residues predominate over residues Lys309 to Lys319. Disordered stretches follow at residues Lys309–Arg343 and Asn381–Lys419. Over residues Ser394–Asp414 the composition is skewed to low complexity.

Seems not necessary for chloroplast and nuclear photorelocation movements. The polypeptide is Protein PLASTID MOVEMENT IMPAIRED 1-RELATED 2 (Arabidopsis thaliana (Mouse-ear cress)).